The sequence spans 118 residues: Putative pterin-4-alpha-carbinolamine dehydratase (118 aa).

The protein belongs to the pterin-4-alpha-carbinolamine dehydratase family.

It catalyses the reaction (4aS,6R)-4a-hydroxy-L-erythro-5,6,7,8-tetrahydrobiopterin = (6R)-L-erythro-6,7-dihydrobiopterin + H2O. The protein is Putative pterin-4-alpha-carbinolamine dehydratase of Xanthomonas campestris pv. campestris (strain 8004).